A 335-amino-acid chain; its full sequence is MTLPRSLRWTGDHLDLLDQRCLPHTVVYRQLTHWREVSEAIRSMAVRGAPAIGVAAAWGVVLAAKAGDDLDQAIEGLRASRPTAVNLSWALNRMQTSAKSNGWVDVHQLERLASAIEAEDRALTQALVNHGVGVLPEDCRVLHHCHTGAVATAGVGTALGVIVAGHQRGIVKHAWLDETRPRLQGAALSAWELGCCGVPATVIVDGASGLLMRRGQVDVVLVGCDRVAGNGDVANKIGTYNLALAARAHGVPFYVCAPSSSIDITTVDGDAITIEERPEDEITHFRGELVCASGVRAWNPAFDITPAHLITGLITEFGVIRSPSRESIASLPFAN.

Residues 47 to 49 (RGA), Arg-81, and Gln-184 each bind substrate. The Proton donor role is filled by Asp-225. Residue 235–236 (NK) participates in substrate binding.

The protein belongs to the eIF-2B alpha/beta/delta subunits family. MtnA subfamily.

The catalysed reaction is 5-(methylsulfanyl)-alpha-D-ribose 1-phosphate = 5-(methylsulfanyl)-D-ribulose 1-phosphate. Its pathway is amino-acid biosynthesis; L-methionine biosynthesis via salvage pathway; L-methionine from S-methyl-5-thio-alpha-D-ribose 1-phosphate: step 1/6. Its function is as follows. Catalyzes the interconversion of methylthioribose-1-phosphate (MTR-1-P) into methylthioribulose-1-phosphate (MTRu-1-P). This chain is Methylthioribose-1-phosphate isomerase, found in Synechococcus sp. (strain CC9902).